Here is a 441-residue protein sequence, read N- to C-terminus: Coiled-coil domain-containing protein 91 (441 aa).

The interval 1–16 (MDDDDFGGFEAAETFD) is GGA1-binding motif. The disordered stretch occupies residues 1–26 (MDDDDFGGFEAAETFDGGSGETQTTS). A phosphoserine mark is found at S43 and S46. Coiled coils occupy residues 130–209 (SNIQ…GHEA) and 249–407 (ELLN…KRLD). The interval 210–413 (LSIIVDEYKA…KRLDQVIRQR (204 aa)) is homodimerization.

Homodimer. Interacts with GGA1, GGA2 and AP1G1. Widely expressed.

It is found in the membrane. The protein localises to the golgi apparatus. Its subcellular location is the trans-Golgi network membrane. The protein resides in the trans-Golgi network. Functionally, involved in the regulation of membrane traffic through the trans-Golgi network (TGN). Functions in close cooperation with the GGAs in the sorting of hydrolases to lysosomes. This chain is Coiled-coil domain-containing protein 91 (CCDC91), found in Homo sapiens (Human).